A 460-amino-acid chain; its full sequence is Gastric inhibitory polypeptide receptor (460 aa).

The N-terminal stretch at 1–18 (MPLRLLLLLLWLWGLQWA) is a signal peptide. Residues 19-134 (ETDSEGQTTT…DQTLILERLQ (116 aa)) lie on the Extracellular side of the membrane. Cystine bridges form between Cys-42–Cys-66, Cys-57–Cys-99, and Cys-80–Cys-114. Residues Asn-58, Asn-68, and Asn-73 are each glycosylated (N-linked (GlcNAc...) asparagine). Residues 135 to 155 (IMYTVGYSLSLTTLLLALLIL) form a helical membrane-spanning segment. The Cytoplasmic segment spans residues 156-166 (SLFRRLHCTRN). A helical membrane pass occupies residues 167–185 (YIHMNLFTSFMLRAAAILT). Residues 186 to 222 (RDQLLPPLGPYTGDQAPTPWNQALAACRTAQIMTQYC) are Extracellular-facing. Residues 223–243 (VGANYTWLLVEGVYLHHLLVI) form a helical membrane-spanning segment. Topologically, residues 244-255 (VGRSEKGHFRCY) are cytoplasmic. Residues 256 to 276 (LLLGWGAPALFVIPWVIVRYL) traverse the membrane as a helical segment. Residues 277–297 (RENTQCWERNEVKAIWWIIRT) are Extracellular-facing. A helical membrane pass occupies residues 298 to 318 (PILITILINFLIFIRILGILV). The Cytoplasmic portion of the chain corresponds to 319–337 (SKLRTRQMRCPDYRLRLAR). Residues 338–358 (STLTLVPLLGVHEVVFAPVTE) traverse the membrane as a helical segment. Residues 359–370 (EQVEGSLRFAKL) lie on the Extracellular side of the membrane. The chain crosses the membrane as a helical span at residues 371 to 391 (AFEIFLSSFQGFLVSVLYCFI). Topologically, residues 392–460 (NKEVQSEIRQ…PGDEVLESYC (69 aa)) are cytoplasmic.

It belongs to the G-protein coupled receptor 2 family. In terms of assembly, may form homodimers and heterodimers with GLP1R. In terms of processing, N-glycosylation is required for cell surface expression and lengthens receptor half-life by preventing degradation in the ER.

The protein localises to the cell membrane. Its function is as follows. This is a receptor for GIP. The activity of this receptor is mediated by G proteins which activate adenylyl cyclase. In Mus musculus (Mouse), this protein is Gastric inhibitory polypeptide receptor (Gipr).